Here is a 120-residue protein sequence, read N- to C-terminus: Probable non-functional immunoglobulin kappa variable 2D-24 (120 aa).

Residues 1-19 (MRLLAQLLGLLMLWVPGSS) form the signal peptide. Residues 20–120 (GDIVMTQTPL…YYCTQATQFP (101 aa)) form the Ig-like domain. A framework-1 region spans residues 21 to 43 (DIVMTQTPLSSPVTLGQPASISF). Positions 44-59 (RSSQSLVHSDGNTYLS) are complementarity-determining-1. The interval 60–74 (WLQQRPGQPPRLLIY) is framework-2. The interval 75 to 81 (KVSNRFS) is complementarity-determining-2. Positions 82–113 (GVPDRFSGSGAGTDFTLKISRVEAEDVGVYYC) are framework-3. The complementarity-determining-3 stretch occupies residues 114 to 120 (TQATQFP).

In terms of assembly, most probably, the immunoglobulin is not assembled due to incorrect folding of light chain. Immunoglobulins are composed of two identical heavy chains and two identical light chains; disulfide-linked.

The protein localises to the secreted. Its subcellular location is the cell membrane. In terms of biological role, probable non-functional open reading frame (ORF) of V region of the variable domain of immunoglobulin light chains. Non-functional ORF generally cannot participate in the synthesis of a productive immunoglobulin chain due to altered V-(D)-J or switch recombination and/or splicing site (at mRNA level) and/or conserved amino acid change (protein level). Immunoglobulins, also known as antibodies, are membrane-bound or secreted glycoproteins produced by B lymphocytes. In the recognition phase of humoral immunity, the membrane-bound immunoglobulins serve as receptors which, upon binding of a specific antigen, trigger the clonal expansion and differentiation of B lymphocytes into immunoglobulins-secreting plasma cells. Secreted immunoglobulins mediate the effector phase of humoral immunity, which results in the elimination of bound antigens. The antigen binding site is formed by the variable domain of one heavy chain, together with that of its associated light chain. Thus, each immunoglobulin has two antigen binding sites with remarkable affinity for a particular antigen. The variable domains are assembled by a process called V-(D)-J rearrangement and can then be subjected to somatic hypermutations which, after exposure to antigen and selection, allow affinity maturation for a particular antigen. The sequence is that of Probable non-functional immunoglobulin kappa variable 2D-24 from Homo sapiens (Human).